A 353-amino-acid chain; its full sequence is MRFISVSSLLLALAPALNAVPVEVAGSAQGLDVTLSQVGNTRIKAVVKNTGSEDVTFVHLNFFKDAAPVQKVSLFRNATEVQFQGIKQRLITEGLSDDALTTLAPGATIEDEFDIASTSDLSEGGTITINSNGLVPITTDNKVTGYIPFTSNELSIDVDAAEAASVTQAVKILERRTKVTSCSGSRLSALQTALRNTVSLARAAATAAQSGSSSRFQEYFKTTSSSTRSTVAARLNAVANEAASTSSGSTTYYCSDVYGYCSSNVLAYTLPSYNIIANCDLYYSYLPALTSTCHAQDQATTTLHEFTHAPGVYSPGTDDLGYGYSAATALSASQALLNADTYALFANAVNLNC.

Positions 1 to 19 are cleaved as a signal peptide; it reads MRFISVSSLLLALAPALNA. Positions 20–176 are excised as a propeptide; the sequence is VPVEVAGSAQ…TQAVKILERR (157 aa). Cystine bridges form between cysteine 182–cysteine 254 and cysteine 261–cysteine 279. Histidine 304 contacts Zn(2+). Glutamate 305 is a catalytic residue. Histidine 308 and aspartate 319 together coordinate Zn(2+).

It belongs to the peptidase M35 family. It depends on Zn(2+) as a cofactor.

It is found in the secreted. It catalyses the reaction Preferential cleavage of bonds with hydrophobic residues in P1'. Also 3-Asn-|-Gln-4 and 8-Gly-|-Ser-9 bonds in insulin B chain.. In terms of biological role, secreted metalloproteinase that allows assimilation of proteinaceous substrates. Shows high activities on basic nuclear substrates such as histone and protamine. The sequence is that of Neutral protease 2 homolog AO090001000135 from Aspergillus oryzae (strain ATCC 42149 / RIB 40) (Yellow koji mold).